Here is an 89-residue protein sequence, read N- to C-terminus: Cell division topological specificity factor (89 aa).

The protein belongs to the MinE family.

Prevents the cell division inhibition by proteins MinC and MinD at internal division sites while permitting inhibition at polar sites. This ensures cell division at the proper site by restricting the formation of a division septum at the midpoint of the long axis of the cell. This Desulforudis audaxviator (strain MP104C) protein is Cell division topological specificity factor.